Here is a 546-residue protein sequence, read N- to C-terminus: Apolipoprotein N-acyltransferase 1 (546 aa).

Transmembrane regions (helical) follow at residues Phe14–Pro34, Ala41–Val61, Phe62–Phe82, Val85–Leu105, Leu122–Val142, Leu151–Phe171, and Phe194–Phe214. The region spanning Ala233–Ile502 is the CN hydrolase domain. Catalysis depends on Glu280, which acts as the Proton acceptor. Lys361 is an active-site residue. Residue Cys413 is the Nucleophile of the active site. The chain crosses the membrane as a helical span at residues Gly514–Val534.

It belongs to the CN hydrolase family. Apolipoprotein N-acyltransferase subfamily.

It is found in the cell inner membrane. It carries out the reaction N-terminal S-1,2-diacyl-sn-glyceryl-L-cysteinyl-[lipoprotein] + a glycerophospholipid = N-acyl-S-1,2-diacyl-sn-glyceryl-L-cysteinyl-[lipoprotein] + a 2-acyl-sn-glycero-3-phospholipid + H(+). The protein operates within protein modification; lipoprotein biosynthesis (N-acyl transfer). Functionally, catalyzes the phospholipid dependent N-acylation of the N-terminal cysteine of apolipoprotein, the last step in lipoprotein maturation. The polypeptide is Apolipoprotein N-acyltransferase 1 (Treponema pallidum (strain Nichols)).